The sequence spans 1652 residues: Venom factor (1652 aa).

Positions 1-22 (MEGMALYLVAALLIGFPASSFG) are cleaved as a signal peptide. Mg(2+)-binding residues include Pro519, Asp542, Val543, and Asp545. Cystine bridges form between Cys547-Cys808, Cys616-Cys651, Cys684-Cys711, Cys685-Cys718, Cys698-Cys719, Cys864-Cys1502, Cys1347-Cys1478, Cys1378-Cys1447, Cys1495-Cys1500, Cys1507-Cys1579, Cys1526-Cys1650, and Cys1626-Cys1635. Positions 657 to 740 (RRRRRSVVLL…REDELFLARS (84 aa)) are excised as a propeptide. Positions 661–739 (RSVVLLDSKA…KREDELFLAR (79 aa)) are C3a-like domain. The region spanning 684–719 (CCEDGMHENPMGYSCEKREKYIQEGDACKAAFLECC) is the Anaphylatoxin-like domain. Residues 743-754 (EDEFFGEDNIIS) form a factor B binding site region. Residues 992–1270 (HLIITPSGCG…VVGFQGLAEY (279 aa)) constitute a propeptide that is removed on maturation. Residues 992–1270 (HLIITPSGCG…VVGFQGLAEY (279 aa)) form a C3d-like domain region. Residues 1000–1003 (CGEQ) constitute a cross-link (isoglutamyl cysteine thioester (Cys-Gln)). The segment at 1197 to 1260 (VLMAASTERN…GGTYGQTQAT (64 aa)) is factor H binding site. Residues 1507–1650 (CSLLNQQKKI…LSNTLTIFGC (144 aa)) form the NTR domain.

The protein belongs to the venom complement C3 homolog family. As to quaternary structure, heterotrimer of alpha, beta and gamma chains; disulfide-linked. Is active with factor B in the presence of factor D. Post-translationally, first processed by the removal of 4 Arg residues by furin-type protease, forming two chains, alpha and gamma/beta precursor, linked by a disulfide bond. Probably, a cobrin-like protease cleaves the C3a-like domain and then the C3d-like domain, generating the mature venom factor (VF). As to expression, expressed by the venom gland.

The protein localises to the secreted. Complement-activating protein in venom. It is a structural and functional analog of complement component C3b, the activated form of C3. It binds factor B (CFB), which is subsequently cleaved by factor D (CFD) to form the bimolecular complex VF/Bb. VF/Bb is a C3/C5 convertase that cleaves both complement components C3 and C5. Structurally, it resembles the C3b degradation product C3c, which is not able to form a C3/C5 convertase. Unlike C3b/Bb, VF/Bb is a stable complex and completely resistant to the actions of complement regulatory factors H (CFH) and I (CFI). Therefore, VF continuously activates complement resulting in the depletion of complement activity. The polypeptide is Venom factor (Crotalus adamanteus (Eastern diamondback rattlesnake)).